Here is a 644-residue protein sequence, read N- to C-terminus: Adhesion G-protein coupled receptor F2 (644 aa).

An N-terminal signal peptide occupies residues 1–18; that stretch reads MIPAHWLYCLMLLLPIES. The Extracellular segment spans residues 19–386; sequence CRILCQASSK…ESPVLTYITY (368 aa). Asn-155, Asn-219, Asn-293, and Asn-311 each carry an N-linked (GlcNAc...) asparagine glycan. The region spanning 233 to 377 is the GAIN-B domain; sequence SRGSLGKNFT…SILMSPNTLE (145 aa). 2 cysteine pairs are disulfide-bonded: Cys-329–Cys-356 and Cys-344–Cys-358. Positions 329–377 are GPS; it reads CVGWHSLESRWDWRACKTIQENSRQAVCRCRPNKLYTSFSILMSPNTLE. Residues 387-407 form a helical membrane-spanning segment; that stretch reads IGLGISICSLIICLAIEVLVW. The Cytoplasmic portion of the chain corresponds to 408–422; sequence SQVTKTEISYLRHLC. Residues 423 to 443 form a helical membrane-spanning segment; it reads IANIAATLLMADAWFIVASFL. The Extracellular portion of the chain corresponds to 444–465; sequence SGPVLHHNGCVAATFFVHFFYL. A helical transmembrane segment spans residues 466-486; the sequence is SVFFWMLAKALLILYGILIVF. The Cytoplasmic segment spans residues 487-493; the sequence is HTLPKSC. A helical transmembrane segment spans residues 494–514; it reads LVASLFSVGYGCPLVIAIITL. Topologically, residues 515–541 are extracellular; the sequence is AVTEPGKGYLRPEACWLNWDMTKALLA. A helical membrane pass occupies residues 542–562; sequence FVVPALAIVVVNLITVTMVII. Over 563–585 the chain is Cytoplasmic; the sequence is KTQRAAIGSSMFQEVRAIVRICK. Residues 586–606 traverse the membrane as a helical segment; sequence NIAILTPLLGLTWGFGIATVI. The Extracellular portion of the chain corresponds to 607-610; it reads NGHS. The chain crosses the membrane as a helical span at residues 611–631; the sequence is LAFHIIFSLLNALQVSPDAAV.

The protein belongs to the G-protein coupled receptor 2 family. Adhesion G-protein coupled receptor (ADGR) subfamily. Mainly expressed in skin and heart, and very weakly in lung and spleen. Detected in all epidermal layers of skin.

It is found in the membrane. Orphan receptor. The polypeptide is Adhesion G-protein coupled receptor F2 (Adgrf2) (Mus musculus (Mouse)).